A 76-amino-acid chain; its full sequence is MNVTLQSAKMIGAGLATIGLTGVGAGVGIVFGSLVMAYARNPSLKQQLFGYTILGFALTEAVALFALMMAFLILFT.

2 helical membrane passes run 11 to 31 and 53 to 73; these read IGAG…GIVF and ILGF…AFLI.

This sequence belongs to the ATPase C chain family. F-type ATPases have 2 components, CF(1) - the catalytic core - and CF(0) - the membrane proton channel. CF(1) has five subunits: alpha(3), beta(3), gamma(1), delta(1), epsilon(1). CF(0) has three main subunits: a, b and c.

It is found in the mitochondrion membrane. Functionally, this protein is one of the chains of the nonenzymatic membrane component (F0) of mitochondrial ATPase. The protein is ATP synthase subunit 9, mitochondrial (ATP9) of Chondrus crispus (Carrageen Irish moss).